A 445-amino-acid polypeptide reads, in one-letter code: ATP synthase subunit b-delta (445 aa).

Residues 1-168 (MSIFIGQLIG…PSSVVIDTAA (168 aa)) form an ATP synthase subunit b region. A helical transmembrane segment spans residues 3–23 (IFIGQLIGFAVIAFIIVKWVV). Positions 169–445 (TSRLRAASRQ…LAAAQTGLPD (277 aa)) are ATP synthase subunit delta.

This sequence in the N-terminal section; belongs to the ATPase B chain family. The protein in the C-terminal section; belongs to the ATPase delta chain family. F-type ATPases have 2 components, F(1) - the catalytic core - and F(0) - the membrane proton channel. F(1) has five subunits: alpha(3), beta(3), gamma(1), delta(1), epsilon(1). F(0) has three main subunits: a(1), b(2) and c(10-14). The alpha and beta chains form an alternating ring which encloses part of the gamma chain. F(1) is attached to F(0) by a central stalk formed by the gamma and epsilon chains, while a peripheral stalk is formed by the delta and b chains.

The protein resides in the cell membrane. F(1)F(0) ATP synthase produces ATP from ADP in the presence of a proton or sodium gradient. F-type ATPases consist of two structural domains, F(1) containing the extramembraneous catalytic core and F(0) containing the membrane proton channel, linked together by a central stalk and a peripheral stalk. During catalysis, ATP synthesis in the catalytic domain of F(1) is coupled via a rotary mechanism of the central stalk subunits to proton translocation. Functionally, this fusion protein includes a component of the F(0) channel (subunit b) and of the F(1) subunit (subunit delta). Two copies of subunit b and one of delta together form the peripheral 'stator' stalk which links F(1) to F(0). In Mycolicibacterium smegmatis (strain ATCC 700084 / mc(2)155) (Mycobacterium smegmatis), this protein is ATP synthase subunit b-delta (atpFH).